Reading from the N-terminus, the 418-residue chain is FAD-dependent monooxygenase fmqB (418 aa).

2 residues coordinate FAD: Val12 and Arg68. Arg147 is a catalytic residue. Residues Asp272 and Gly285 each coordinate FAD.

This sequence belongs to the paxM FAD-dependent monooxygenase family.

The protein resides in the cytoplasm. Its pathway is alkaloid biosynthesis. In terms of biological role, FAD-dependent monooxygenase; part of the gene cluster that mediates the biosynthesis of the antitumor fumiquinazolines that confer a dual-usage capability to defend against phagocytes in the environment and animal hosts. The simplest member is fumiquinazoline F (FQF) with a 6-6-6 tricyclic core derived from anthranilic acid (Ant), tryptophan (Trp), and alanine (Ala). The trimodular NRPS fmqA is responsible for FQF formation. Modules 1, 2 and 3 of fmqA are predicted to activate and load Ant, Trp and Ala, respectively, providing for the assembly of an Ant-Trp-Ala-S-enzyme intermediate that would undergo double cyclization for chain release and generation of the tricyclic 6-6-6 product fumiquinazoline F. The presence of an E domain predicted for module 2 of fmqA is consistent with epimerization of L-Trp to D-Trp during assembly to generate the R-stereocenter at C14 of FQF. The FAD-dependent monooxygenase fmqB and the monomodular NRPS fmqC then maturate FQF to FQA. FmqB oxidizes the 2',3'-double bond of the indole side chain of FQF, and fmqC activates L-Ala as the adenylate, installs it as the pantetheinyl thioester on its carrier protein domain, and acylates the oxidized indole for subsequent intramolecular cyclization to create the 6-5-5-imidazolindolone of FQA. The FAD-linked oxidoreductase fmqD introduces a third layer of scaffold complexity by converting FQA to the spirohemiaminal FQC, presumably by catalyzing the formation of a transient imine within the pyrazinone ring. FQC subsequently converts nonenzymatically to the known cyclic aminal FQD. The chain is FAD-dependent monooxygenase fmqB from Aspergillus fumigatus (strain ATCC MYA-4609 / CBS 101355 / FGSC A1100 / Af293) (Neosartorya fumigata).